The sequence spans 95 residues: Aspartyl/glutamyl-tRNA(Asn/Gln) amidotransferase subunit C (95 aa).

Belongs to the GatC family. As to quaternary structure, heterotrimer of A, B and C subunits.

The enzyme catalyses L-glutamyl-tRNA(Gln) + L-glutamine + ATP + H2O = L-glutaminyl-tRNA(Gln) + L-glutamate + ADP + phosphate + H(+). The catalysed reaction is L-aspartyl-tRNA(Asn) + L-glutamine + ATP + H2O = L-asparaginyl-tRNA(Asn) + L-glutamate + ADP + phosphate + 2 H(+). Its function is as follows. Allows the formation of correctly charged Asn-tRNA(Asn) or Gln-tRNA(Gln) through the transamidation of misacylated Asp-tRNA(Asn) or Glu-tRNA(Gln) in organisms which lack either or both of asparaginyl-tRNA or glutaminyl-tRNA synthetases. The reaction takes place in the presence of glutamine and ATP through an activated phospho-Asp-tRNA(Asn) or phospho-Glu-tRNA(Gln). In Hydrogenovibrio crunogenus (strain DSM 25203 / XCL-2) (Thiomicrospira crunogena), this protein is Aspartyl/glutamyl-tRNA(Asn/Gln) amidotransferase subunit C.